The following is a 95-amino-acid chain: Ribosome-binding factor A (95 aa).

This sequence belongs to the RbfA family. As to quaternary structure, interacts with the 30S ribosomal subunit as a monomer, binding in a position overlapping the sites of the A and P site tRNAs, and displacing segments of the 16S rRNA. Probably contacts 16S rRNA and ribosomal protein S9 and S13.

The protein localises to the cytoplasm. Its function is as follows. One of several proteins that assist in the late maturation steps of the functional core of the 30S ribosomal subunit. Associates with free 30S ribosomal subunits (but not with 30S subunits that are part of 70S ribosomes or polysomes). Required for efficient processing of 16S rRNA. Probably interacts with the 5'-terminal helix region of 16S rRNA, bringing together different domains of the 30S ribosomal subunit which aids assembly. In Thermus thermophilus (strain ATCC 27634 / DSM 579 / HB8), this protein is Ribosome-binding factor A.